The sequence spans 299 residues: HTH-type transcriptional regulator CynR (299 aa).

Positions 1 to 58 (MLSRHINYFLAVAEHGSFTRAASALHVSQPALSQQIRQLEESLGVPLFDRSGRTIRLT) constitute an HTH lysR-type domain. Residues 18 to 37 (FTRAASALHVSQPALSQQIR) constitute a DNA-binding region (H-T-H motif).

This sequence belongs to the LysR transcriptional regulatory family.

Its subcellular location is the cytoplasm. Positively regulates the cynTSX operon, and negatively regulates its own transcription. Binds specifically to the cynR-cynTSX intergenic region. This chain is HTH-type transcriptional regulator CynR (cynR), found in Escherichia coli (strain K12).